The chain runs to 252 residues: Putative peptide zinc metalloprotease protein YydH (252 aa).

2 consecutive transmembrane segments (helical) span residues 56–76 (FFYLFLSFTALMFILNYIHLI) and 85–105 (VFYGWKMWIIIVIYFIMNIVL). H106 serves as a coordination point for Zn(2+). Residue E107 is part of the active site. H110 contacts Zn(2+). Transmembrane regions (helical) follow at residues 152 to 172 (IIVHLFGLFINYLLINTLELI), 181 to 201 (ALTMAFMLFSSTLLWNLIPIL), and 231 to 251 (IQIIGIGLAVNSVVHWILYIV).

The protein belongs to the peptidase M50B family. Zn(2+) serves as cofactor.

It localises to the cell membrane. In terms of biological role, required for production of the modified peptide YydF. May process the precursor form of YydF to release the active peptide (Potential). The protein is Putative peptide zinc metalloprotease protein YydH (yydH) of Bacillus subtilis (strain 168).